Here is a 445-residue protein sequence, read N- to C-terminus: WD repeat domain phosphoinositide-interacting protein 2 (445 aa).

A WD 1 repeat occupies 182 to 222; sequence AHDSPLAALAFDASGTKLATASEKGTVIRVFSIPEGQKLFE. Positions 223-226 match the L/FRRG motif motif; it reads FRRG. WD repeat units lie at residues 228–267 and 311–349; these read KRCV…EKPP and GHKN…GGEC. At serine 395 the chain carries Phosphoserine.

The protein belongs to the WD repeat PROPPIN family. In terms of assembly, interacts with TECPR1. Interacts with ATG16L1. Interacts with ATG5. Interacts with WIPI1. Interacts with WDR45. May interact with NUDC. Interacts with ULK1 and RB1CC1.

The protein localises to the preautophagosomal structure membrane. Component of the autophagy machinery that controls the major intracellular degradation process by which cytoplasmic materials are packaged into autophagosomes and delivered to lysosomes for degradation. Involved in an early step of the formation of preautophagosomal structures. Binds and is activated by phosphatidylinositol 3-phosphate (PtdIns3P) forming on membranes of the endoplasmic reticulum upon activation of the upstream ULK1 and PI3 kinases. Mediates ER-isolation membranes contacts by interacting with the ULK1:RB1CC1 complex and PtdIns3P. Once activated, WIPI2 recruits at phagophore assembly sites the ATG12-ATG5-ATG16L1 complex that directly controls the elongation of the nascent autophagosomal membrane. The sequence is that of WD repeat domain phosphoinositide-interacting protein 2 from Mus musculus (Mouse).